Reading from the N-terminus, the 430-residue chain is Vitamin B6 salvage pathway transcriptional repressor PtsJ (430 aa).

In terms of domain architecture, HTH gntR-type spans 4 to 72 (GKTANEIFDS…GRNGTVIKGS (69 aa)). The H-T-H motif DNA-binding region spans 32-51 (VRELASELKVNRNTVAAAYK). The segment at 70-95 (KGSPSPVALEGGDPHTPLHDLSGGNP) is disordered. The residue at position 282 (Lys282) is an N6-(pyridoxal phosphate)lysine.

The protein in the C-terminal section; belongs to the class-I pyridoxal-phosphate-dependent aminotransferase family. Homodimer in both apo- and holo-forms.

Its function is as follows. Acts as a transcriptional repressor of the pdxK gene, encoding a pyridoxal kinase involved in the vitamin B6 salvage pathway. Also represses transcription of its own gene. Binds to the ptsJ-pdxK intergenic region, but does not bind pdxY and pdxH promoters. Among all six B6 vitamers, only pyridoxal 5'-phosphate (PLP) clearly binds to the protein and acts as an effector molecule for PtsJ, inducing a protein conformational change that increases affinity for DNA. Thus, PLP stabilizes protein-DNA interactions, reinforcing repression. The chain is Vitamin B6 salvage pathway transcriptional repressor PtsJ from Salmonella typhimurium (strain LT2 / SGSC1412 / ATCC 700720).